The chain runs to 360 residues: Protein phosphatase 1 regulatory subunit 7 (360 aa).

A disordered region spans residues 1 to 64 (MAAERGAGQQ…GEEDPEEEHE (64 aa)). Residue Ala-2 is modified to N-acetylalanine. Phosphoserine is present on residues Ser-12, Ser-24, Ser-27, Ser-44, and Ser-47. Basic and acidic residues predominate over residues 17–34 (EVDRRVESEESGDEEGKK). Residues 53–63 (ERGEEDPEEEH) show a composition bias toward acidic residues. 11 LRR repeats span residues 77–98 (DAEDVDLNHYRIGKIEGFEVLK), 99–120 (KVKTLCLRQNLIKCIENLEELQ), 121–142 (SLRELDLYDNQIKKIENLEALT), 143–164 (ELEILDISFNLLRNIEGVDKVT), 165–186 (QLKKLFLVNNKISKIENLSNLH), 187–208 (QLQMLELGSNRIRAIENIDTLT), 209–230 (NLESLFLGKNKITKLQNLDALT), 231–252 (NLTVLSMQSNRLTKIEGLQNLV), 253–274 (NLQELYLSHNGIEVIEGLENNN), 275–296 (KLTMLDIASNRIKKIENISHLT), and 297–318 (EPQEFWMNDNLLESWSDLDELK). Ser-322 carries the post-translational modification Phosphoserine. The region spanning 331–360 (NPLQKDPQYRRKVMLALPSVRQIDATFVRF) is the LRRCT domain.

The protein belongs to the SDS22 family. In terms of assembly, interacts with PPP1CA, PPP1CB and PPP1CC/PPP1G.

Its subcellular location is the nucleus. Functionally, regulatory subunit of protein phosphatase 1. This Pongo abelii (Sumatran orangutan) protein is Protein phosphatase 1 regulatory subunit 7 (PPP1R7).